A 194-amino-acid chain; its full sequence is Histone H1.0-A (194 aa).

2 disordered regions span residues 1-29 (MTEN…YSDM) and 96-194 (ADEV…GRKK). The 74-residue stretch at 22-95 (DHPKYSDMIL…GASGSFRLAK (74 aa)) folds into the H15 domain. 2 stretches are compositionally biased toward basic residues: residues 102–164 (PAKK…KTVR) and 172–194 (KAKK…GRKK).

Belongs to the histone H1/H5 family.

It localises to the nucleus. The protein resides in the chromosome. Functionally, histones H1 are necessary for the condensation of nucleosome chains into higher-order structures. The histones H1.0 are found in cells that are in terminal stages of differentiation or that have low rates of cell division. In Xenopus laevis (African clawed frog), this protein is Histone H1.0-A (h1-0-a).